We begin with the raw amino-acid sequence, 126 residues long: Fluoride-specific ion channel FluC (126 aa).

The next 4 membrane-spanning stretches (helical) occupy residues 5–25 (ILCV…FYFG), 34–54 (YIFI…GFVL), 71–91 (VTGL…NAVF), and 100–120 (FFLN…LGIY). Na(+) contacts are provided by Gly76 and Thr79.

It belongs to the fluoride channel Fluc/FEX (TC 1.A.43) family.

The protein localises to the cell inner membrane. The catalysed reaction is fluoride(in) = fluoride(out). With respect to regulation, na(+) is not transported, but it plays an essential structural role and its presence is essential for fluoride channel function. Functionally, fluoride-specific ion channel. Important for reducing fluoride concentration in the cell, thus reducing its toxicity. This is Fluoride-specific ion channel FluC from Campylobacter hominis (strain ATCC BAA-381 / DSM 21671 / CCUG 45161 / LMG 19568 / NCTC 13146 / CH001A).